The primary structure comprises 205 residues: Delta-aminolevulinic acid dehydratase (205 aa).

Cys117, Cys119, and Cys127 together coordinate Zn(2+). Catalysis depends on Lys192, which acts as the Schiff-base intermediate with substrate. Arg202 is a substrate binding site.

It belongs to the ALAD family. In terms of assembly, homooctamer. Requires Zn(2+) as cofactor.

It carries out the reaction 2 5-aminolevulinate = porphobilinogen + 2 H2O + H(+). The protein operates within porphyrin-containing compound metabolism; protoporphyrin-IX biosynthesis; coproporphyrinogen-III from 5-aminolevulinate: step 1/4. In terms of biological role, catalyzes an early step in the biosynthesis of tetrapyrroles. Binds two molecules of 5-aminolevulinate per subunit, each at a distinct site, and catalyzes their condensation to form porphobilinogen. This is Delta-aminolevulinic acid dehydratase (hemB) from Ruminiclostridium josui (Clostridium josui).